An 848-amino-acid polypeptide reads, in one-letter code: Adenylate cyclase (848 aa).

Residues 1–535 (MYLYIETLKQ…DVSHHFPLRL (535 aa)) form a catalytic region. The interval 541-848 (KALYSPCEIR…DAPLLQQYFS (308 aa)) is regulatory. His-609 carries the phosphohistidine; by CRR modification.

It belongs to the adenylyl cyclase class-1 family.

It is found in the cytoplasm. It carries out the reaction ATP = 3',5'-cyclic AMP + diphosphate. This is Adenylate cyclase (cyaA) from Escherichia coli O6:H1 (strain CFT073 / ATCC 700928 / UPEC).